A 268-amino-acid chain; its full sequence is Homeobox protein Hox-C4a (268 aa).

A disordered region spans residues 70–129 (PEPDTQRGHGLPHAGHLLGKGQSASCEPPPLPLSPATPSAASSACNQATPEHPNSSASAK). 2 stretches are compositionally biased toward low complexity: residues 77–95 (GHGLPHAGHLLGKGQSASC) and 105–114 (ATPSAASSAC). Positions 115 to 128 (NQATPEHPNSSASA) are enriched in polar residues. The short motif at 133–138 (VYPWMK) is the Antp-type hexapeptide element. Residues 154-213 (PKRSRTAYTRQQVLELEKEFHYNRYLTRRRRIEIAHSLVLSERQIKIWFQNRRMKWKKDH) constitute a DNA-binding region (homeobox). The segment at 212–268 (DHRLPNTKVRSSSSTGISSGSNTSSAAGVVAAASTTNTMSASEDLSGTERGEDITRL) is disordered. Positions 222-253 (SSSSTGISSGSNTSSAAGVVAAASTTNTMSAS) are enriched in low complexity. Basic and acidic residues predominate over residues 258 to 268 (GTERGEDITRL).

Belongs to the Antp homeobox family. Deformed subfamily.

Its subcellular location is the nucleus. Functionally, sequence-specific transcription factor which is part of a developmental regulatory system that provides cells with specific positional identities on the anterior-posterior axis. In Danio rerio (Zebrafish), this protein is Homeobox protein Hox-C4a (hoxc4a).